The chain runs to 418 residues: NADH-quinone oxidoreductase subunit D (418 aa).

The protein belongs to the complex I 49 kDa subunit family. NDH-1 is composed of 14 different subunits. Subunits NuoB, C, D, E, F, and G constitute the peripheral sector of the complex.

It localises to the cell inner membrane. The catalysed reaction is a quinone + NADH + 5 H(+)(in) = a quinol + NAD(+) + 4 H(+)(out). NDH-1 shuttles electrons from NADH, via FMN and iron-sulfur (Fe-S) centers, to quinones in the respiratory chain. The immediate electron acceptor for the enzyme in this species is believed to be ubiquinone. Couples the redox reaction to proton translocation (for every two electrons transferred, four hydrogen ions are translocated across the cytoplasmic membrane), and thus conserves the redox energy in a proton gradient. The chain is NADH-quinone oxidoreductase subunit D from Bordetella avium (strain 197N).